Here is a 523-residue protein sequence, read N- to C-terminus: Major facilitator-type transporter psiT2 (523 aa).

Residues 1–26 (MSLERSTSPNPTERTSLLSDTASTIS) are compositionally biased toward polar residues. Positions 1–45 (MSLERSTSPNPTERTSLLSDTASTISSRDDVEQSSLKQRRTPIPT) are disordered. 5 consecutive transmembrane segments (helical) span residues 88–108 (FYSG…IFML), 125–145 (ALGI…TMML), 149–169 (VCAG…SELT), 175–195 (ALVV…GPLI), and 221–241 (FLPS…GYFF). N-linked (GlcNAc...) asparagine glycosylation occurs at Asn-269. Helical transmembrane passes span 317 to 337 (FLMF…FTAV), 352 to 372 (AFSV…PWVL), and 382 to 402 (HFCM…NPLA). Asn-410 is a glycosylation site (N-linked (GlcNAc...) asparagine). 3 consecutive transmembrane segments (helical) span residues 419–439 (GLLY…VMAF), 455–474 (LATA…AFCP), and 488–508 (NILG…VGVW).

This sequence belongs to the major facilitator superfamily. TCR/Tet family.

It is found in the membrane. Major facilitator-type transporter; part of the gene cluster that mediates the biosynthesis of psilocybin, a psychotropic tryptamine-derived natural product. This is Major facilitator-type transporter psiT2 from Psilocybe cubensis (Psychedelic mushroom).